The chain runs to 253 residues: MHIDVIGHGPALVLLHGWALHGGVFAPLVERLAPHYQLHLVDLPGHGFSRDDSTPLALPYVVAEIAAATPPAVWLGWSLGGLFALHAAATLPQVRGLAMIAATPRFVRGSDWPDAVQRELFVQFGTELSRDYRGTLERFLALDTLGSAHARSELRSLRETLTARGEPAPEALQQGLSLLERTDLRRALPQLARPSLWIAGQRDRLVPAAGMHAAAALSPHAQALTIAGGGHAPFLGHADQVSEALQRFVASVP.

Substrate contacts are provided by residues Trp-18, 78 to 79 (SL), and 139 to 143 (FLALD). Catalysis depends on Ser-78, which acts as the Nucleophile. Residues Asp-203 and His-231 contribute to the active site. Substrate is bound at residue His-231.

It belongs to the AB hydrolase superfamily. Carboxylesterase BioH family. As to quaternary structure, monomer.

The protein resides in the cytoplasm. It catalyses the reaction 6-carboxyhexanoyl-[ACP] methyl ester + H2O = 6-carboxyhexanoyl-[ACP] + methanol + H(+). It functions in the pathway cofactor biosynthesis; biotin biosynthesis. In terms of biological role, the physiological role of BioH is to remove the methyl group introduced by BioC when the pimeloyl moiety is complete. It allows to synthesize pimeloyl-ACP via the fatty acid synthetic pathway through the hydrolysis of the ester bonds of pimeloyl-ACP esters. The polypeptide is Pimeloyl-[acyl-carrier protein] methyl ester esterase (Xanthomonas oryzae pv. oryzae (strain MAFF 311018)).